A 289-amino-acid polypeptide reads, in one-letter code: 4-diphosphocytidyl-2-C-methyl-D-erythritol kinase (289 aa).

Lys-10 is a catalytic residue. Position 94 to 104 (94 to 104 (PVAAGLAGGSS)) interacts with ATP. Residue Asp-136 is part of the active site.

The protein belongs to the GHMP kinase family. IspE subfamily.

It carries out the reaction 4-CDP-2-C-methyl-D-erythritol + ATP = 4-CDP-2-C-methyl-D-erythritol 2-phosphate + ADP + H(+). It participates in isoprenoid biosynthesis; isopentenyl diphosphate biosynthesis via DXP pathway; isopentenyl diphosphate from 1-deoxy-D-xylulose 5-phosphate: step 3/6. Functionally, catalyzes the phosphorylation of the position 2 hydroxy group of 4-diphosphocytidyl-2C-methyl-D-erythritol. The protein is 4-diphosphocytidyl-2-C-methyl-D-erythritol kinase of Bacillus pumilus (strain SAFR-032).